The following is a 363-amino-acid chain: S-methylmethionine--homocysteine S-methyltransferase BHMT2 (363 aa).

The Hcy-binding domain occupies 11–305 (KVILERLDSG…YHIRAIAEEL (295 aa)). Zn(2+)-binding residues include cysteine 208, cysteine 290, and cysteine 291.

Homotetramer. Zn(2+) is required as a cofactor.

The catalysed reaction is S-methyl-L-methionine + L-homocysteine = 2 L-methionine + H(+). It participates in amino-acid biosynthesis; L-methionine biosynthesis via de novo pathway; L-methionine from L-homocysteine (BhmT route): step 1/1. Involved in the regulation of homocysteine metabolism. Converts betaine and homocysteine to dimethylglycine and methionine, respectively. This reaction is also required for the irreversible oxidation of choline. This chain is S-methylmethionine--homocysteine S-methyltransferase BHMT2 (Bhmt2), found in Rattus norvegicus (Rat).